The sequence spans 431 residues: Histidine--tRNA ligase (431 aa).

It belongs to the class-II aminoacyl-tRNA synthetase family. As to quaternary structure, homodimer.

It localises to the cytoplasm. It carries out the reaction tRNA(His) + L-histidine + ATP = L-histidyl-tRNA(His) + AMP + diphosphate + H(+). In Finegoldia magna (strain ATCC 29328 / DSM 20472 / WAL 2508) (Peptostreptococcus magnus), this protein is Histidine--tRNA ligase.